The sequence spans 377 residues: D-alanine--D-alanine ligase (377 aa).

In terms of domain architecture, ATP-grasp spans 140–349 (KELLTVNNIR…NVELVDKLID (210 aa)). 170–225 (VKDLGDVVFVKAANQGSSVGVSRAKTADEFEAALTDSFQYDYKVLIEAAVKGPREL) is an ATP binding site. Mg(2+) contacts are provided by Asp303, Glu316, and Asn318.

This sequence belongs to the D-alanine--D-alanine ligase family. The cofactor is Mg(2+). Mn(2+) serves as cofactor.

It localises to the cytoplasm. The enzyme catalyses 2 D-alanine + ATP = D-alanyl-D-alanine + ADP + phosphate + H(+). It functions in the pathway cell wall biogenesis; peptidoglycan biosynthesis. In terms of biological role, cell wall formation. This Leuconostoc citreum (strain KM20) protein is D-alanine--D-alanine ligase.